The sequence spans 150 residues: Catabolic 3-dehydroquinase 1 (150 aa).

Catalysis depends on Y24, which acts as the Proton acceptor. N75, H81, and D88 together coordinate substrate. H101 functions as the Proton donor in the catalytic mechanism. Residues 102–103 and R112 contribute to the substrate site; that span reads VS.

This sequence belongs to the type-II 3-dehydroquinase family. Homododecamer. Adopts a ring-like structure, composed of an arrangement of two hexameric rings stacked on top of one another.

It carries out the reaction 3-dehydroquinate = 3-dehydroshikimate + H2O. The protein operates within aromatic compound metabolism; 3,4-dihydroxybenzoate biosynthesis; 3,4-dihydroxybenzoate from 3-dehydroquinate: step 1/2. In terms of biological role, is involved in the catabolism of quinate. Allows the utilization of quinate as carbon source via the beta-ketoadipate pathway. The sequence is that of Catabolic 3-dehydroquinase 1 from Neosartorya fischeri (strain ATCC 1020 / DSM 3700 / CBS 544.65 / FGSC A1164 / JCM 1740 / NRRL 181 / WB 181) (Aspergillus fischerianus).